A 561-amino-acid chain; its full sequence is Cytosolic purine 5'-nucleotidase (561 aa).

The active-site Nucleophile is the Asp52. GMP-binding residues include Asp52 and Asp54. IMP-binding residues include Asp52 and Asp54. 2 residues coordinate Mg(2+): Asp52 and Asp54. Catalysis depends on Asp54, which acts as the Proton donor. Arg144 serves as a coordination point for (2R)-2,3-bisphosphoglycerate. ATP contacts are provided by Arg144 and Asn154. Arg144 and Asn154 together coordinate dATP. Asn154 provides a ligand contact to adenosine. Asn154 is a P(1),P(4)-bis(5'-adenosyl) tetraphosphate binding site. Residues Arg202, Asp206, Lys215, Thr249, and Asn250 each contribute to the GMP site. The IMP site is built by Arg202, Asp206, Lys215, Thr249, Asn250, Ser251, and Lys292. Lys292 serves as a coordination point for GMP. Asp351 is a Mg(2+) binding site. Lys362 contributes to the (2R)-2,3-bisphosphoglycerate binding site. Lys362 is a binding site for P(1),P(4)-bis(5'-adenosyl) tetraphosphate. Position 418 is a phosphoserine (Ser418). Met436 and Gln453 together coordinate adenosine. ATP contacts are provided by Gln453 and Arg456. Positions 453 and 456 each coordinate dATP. Gln453 contributes to the P(1),P(4)-bis(5'-adenosyl) tetraphosphate binding site. (2R)-2,3-bisphosphoglycerate is bound at residue Tyr457. Tyr457 contributes to the P(1),P(4)-bis(5'-adenosyl) tetraphosphate binding site. Ser502, Ser511, and Ser527 each carry phosphoserine. Residues 538-561 (PLAPQEITHCHDEDDDEEEEEEEE) form a disordered region. A required for tetramer assembly region spans residues 548 to 561 (HDEDDDEEEEEEEE). Over residues 550-561 (EDDDEEEEEEEE) the composition is skewed to acidic residues.

It belongs to the 5'(3')-deoxyribonucleotidase family. As to quaternary structure, homotetramer. Mg(2+) serves as cofactor. Widely expressed.

The protein resides in the cytoplasm. It localises to the cytosol. The catalysed reaction is a ribonucleoside 5'-phosphate + H2O = a ribonucleoside + phosphate. It catalyses the reaction a 2'-deoxyribonucleoside + a ribonucleoside 5'-phosphate = a ribonucleoside + a 2'-deoxyribonucleoside 5'-phosphate. It carries out the reaction IMP + H2O = inosine + phosphate. The enzyme catalyses GMP + H2O = guanosine + phosphate. The catalysed reaction is dIMP + H2O = 2'-deoxyinosine + phosphate. It catalyses the reaction dGMP + H2O = 2'-deoxyguanosine + phosphate. It carries out the reaction XMP + H2O = xanthosine + phosphate. The enzyme catalyses inosine + GMP = guanosine + IMP. The catalysed reaction is dGMP + inosine = 2'-deoxyguanosine + IMP. It catalyses the reaction dIMP + inosine = 2'-deoxyinosine + IMP. It carries out the reaction inosine + UMP = uridine + IMP. The enzyme catalyses inosine + CMP = cytidine + IMP. The catalysed reaction is inosine + AMP = IMP + adenosine. Its activity is regulated as follows. Allosterically activated by various compounds including ATP, 2,3-BPG/2,3-Bisphosphoglyceric acid and Ap4A/P1,P4-bis(5'-adenosyl) tetraphosphate. Binding of an allosteric activator is a prerequisiste to magnesium and substrate binding. Inhibited by inorganic phosphate. Its function is as follows. Broad specificity cytosolic 5'-nucleotidase that catalyzes the dephosphorylation of 6-hydroxypurine nucleoside 5'-monophosphates. In addition, possesses a phosphotransferase activity by which it can transfer a phosphate from a donor nucleoside monophosphate to an acceptor nucleoside, preferably inosine, deoxyinosine and guanosine. Has the highest activities for IMP and GMP followed by dIMP, dGMP and XMP. Could also catalyze the transfer of phosphates from pyrimidine monophosphates but with lower efficiency. Through these activities regulates the purine nucleoside/nucleotide pools within the cell. This chain is Cytosolic purine 5'-nucleotidase, found in Homo sapiens (Human).